Consider the following 475-residue polypeptide: Ankyrin repeat, SAM and basic leucine zipper domain-containing protein 1 (475 aa).

Phosphoserine is present on residues S17, S18, and S20. ANK repeat units follow at residues 45–74 (EKNE…SVES), 78–107 (YGWT…NASF), 110–144 (DKQT…DPNV), 148–177 (RLMT…EVNS), 181–210 (NGYT…NKML), and 214–243 (DGKT…PLEG). One can recognise an SAM domain in the interval 272–334 (SYTAFGDLEI…KILAALKELE (63 aa)).

In terms of assembly, interacts with DDX4, PIWIL1, RANBP9 and TDRD1.

Its subcellular location is the cytoplasm. Plays a central role during spermatogenesis by repressing transposable elements and preventing their mobilization, which is essential for the germline integrity. Acts via the piRNA metabolic process, which mediates the repression of transposable elements during meiosis by forming complexes composed of piRNAs and Piwi proteins and governs the methylation and subsequent repression of transposons. Its association with pi-bodies suggests a participation in the primary piRNAs metabolic process. Required prior to the pachytene stage to facilitate the production of multiple types of piRNAs, including those associated with repeats involved in the regulation of retrotransposons. May act by mediating protein-protein interactions during germ cell maturation. The sequence is that of Ankyrin repeat, SAM and basic leucine zipper domain-containing protein 1 (ASZ1) from Mustela putorius furo (European domestic ferret).